The chain runs to 210 residues: Tissue inhibitor of metalloproteinase (210 aa).

The signal sequence occupies residues 1 to 27 (MDLRKHLGLLTLLLVAVFAFYGRPADA). Zn(2+) is bound at residue Cys-28. 2 involved in metalloproteinase-binding regions span residues 28-31 (CSCM) and 93-94 (DA). 5 disulfides stabilise this stretch: Cys-28/Cys-96, Cys-30/Cys-118, Cys-145/Cys-195, Cys-150/Cys-155, and Cys-165/Cys-180. Positions 28–145 (CSCMPSHPQT…SGGYAKATNC (118 aa)) constitute an NTR domain.

It belongs to the protease inhibitor I35 (TIMP) family. Expressed in heads of female and male adult flies. Expressed at the time of eclosion in unopened wings of adult flies. Strongly expressed at the tip of ovarian germarium region 1 where germline stem cells (GSCs) and cystoblasts reside and in region 2 of the germarium.

Its subcellular location is the secreted. Functionally, metalloproteinase inhibitor that acts on both matrix metalloproteinases Mmp1 and Mmp2 in vitro. Complexes with metalloproteinases and irreversibly inactivates them by binding to their catalytic zinc cofactor. Required for wing maturation which is the final step in morphogenesis of the adult fly. Involved in the negative regulation of developmental tissue invasion for imaginal disk eversion during metamorphosis by inhibiting Mmp-mediated basement membrane (BM) degradation. Required for oogenesis and for the long-term maintainance of germarial structure and shape in the adult ovaries. Required for maintaining composition and biophysical properties of the extracellular matrix (ECM), and for the normal organization and cyst production of the germline stem cell (GSC) niche. This Drosophila melanogaster (Fruit fly) protein is Tissue inhibitor of metalloproteinase.